A 336-amino-acid chain; its full sequence is tRNA-cytidine(32) 2-sulfurtransferase (336 aa).

Positions Met-1 to Arg-34 are disordered. Low complexity predominate over residues Ala-10–Thr-22. The short motif at Ser-75 to Ser-80 is the PP-loop motif element. The [4Fe-4S] cluster site is built by Cys-150, Cys-153, and Cys-241.

This sequence belongs to the TtcA family. Homodimer. Mg(2+) is required as a cofactor. [4Fe-4S] cluster serves as cofactor.

The protein localises to the cytoplasm. The catalysed reaction is cytidine(32) in tRNA + S-sulfanyl-L-cysteinyl-[cysteine desulfurase] + AH2 + ATP = 2-thiocytidine(32) in tRNA + L-cysteinyl-[cysteine desulfurase] + A + AMP + diphosphate + H(+). It participates in tRNA modification. Catalyzes the ATP-dependent 2-thiolation of cytidine in position 32 of tRNA, to form 2-thiocytidine (s(2)C32). The sulfur atoms are provided by the cysteine/cysteine desulfurase (IscS) system. In Paraburkholderia phytofirmans (strain DSM 17436 / LMG 22146 / PsJN) (Burkholderia phytofirmans), this protein is tRNA-cytidine(32) 2-sulfurtransferase.